A 101-amino-acid polypeptide reads, in one-letter code: Urease subunit beta (101 aa).

The protein belongs to the urease beta subunit family. As to quaternary structure, heterotrimer of UreA (gamma), UreB (beta) and UreC (alpha) subunits. Three heterotrimers associate to form the active enzyme.

It is found in the cytoplasm. It catalyses the reaction urea + 2 H2O + H(+) = hydrogencarbonate + 2 NH4(+). Its pathway is nitrogen metabolism; urea degradation; CO(2) and NH(3) from urea (urease route): step 1/1. This Psychromonas ingrahamii (strain DSM 17664 / CCUG 51855 / 37) protein is Urease subunit beta.